Reading from the N-terminus, the 467-residue chain is Membrane-bound lytic murein transglycosylase F (467 aa).

The first 33 residues, 1–33 (MTELFRHSKHLLASLALLSVLGLMLAMHPSPSA), serve as a signal peptide directing secretion. Residues 34 to 266 (IERIMARGEL…KLEDRFYGHV (233 aa)) form a non-LT domain region. The segment at 268–467 (QFNLYAARSF…RRDDTLIALN (200 aa)) is LT domain. The active site involves Glu313.

This sequence in the N-terminal section; belongs to the bacterial solute-binding protein 3 family. In the C-terminal section; belongs to the transglycosylase Slt family.

Its subcellular location is the cell outer membrane. The enzyme catalyses Exolytic cleavage of the (1-&gt;4)-beta-glycosidic linkage between N-acetylmuramic acid (MurNAc) and N-acetylglucosamine (GlcNAc) residues in peptidoglycan, from either the reducing or the non-reducing ends of the peptidoglycan chains, with concomitant formation of a 1,6-anhydrobond in the MurNAc residue.. In terms of biological role, murein-degrading enzyme that degrades murein glycan strands and insoluble, high-molecular weight murein sacculi, with the concomitant formation of a 1,6-anhydromuramoyl product. Lytic transglycosylases (LTs) play an integral role in the metabolism of the peptidoglycan (PG) sacculus. Their lytic action creates space within the PG sacculus to allow for its expansion as well as for the insertion of various structures such as secretion systems and flagella. The protein is Membrane-bound lytic murein transglycosylase F of Alcanivorax borkumensis (strain ATCC 700651 / DSM 11573 / NCIMB 13689 / SK2).